The chain runs to 187 residues: MASTTLSIATTIRSSSPLTSASTHHFLSKPTAIEFPFRLSSSSSHRAINLRPISAVEAPEKIEKIGSEISSLTLEEARILVDYLQDKFGVSPLSLAPAAAAVAAPADGGAAAVVEEQTEFDVVINEVPSSSRIAVIKAVRALTSLALKEAKELIEGLPKKFKEGITKDEAEEAKKTLEEAGAKVSIA.

The N-terminal 54 residues, 1–54 (MASTTLSIATTIRSSSPLTSASTHHFLSKPTAIEFPFRLSSSSSHRAINLRPIS), are a transit peptide targeting the chloroplast.

The protein belongs to the bacterial ribosomal protein bL12 family.

The protein localises to the plastid. The protein resides in the chloroplast. This Arabidopsis thaliana (Mouse-ear cress) protein is Large ribosomal subunit protein bL12cx (RPL12C).